We begin with the raw amino-acid sequence, 623 residues long: Zinc finger protein 143 (623 aa).

7 C2H2-type zinc fingers span residues 230-254, 260-284, 290-314, 320-344, 350-374, 380-404, and 410-433; these read FRCEHEGCGKLYTTAHHLKVHERSH, YICDHLGCGKKFATGYGLKSHVRTH, YRCQELNCLKSFKTSGDLQKHTRTH, FKCPFEGCGRSFTTSNIRKVHIRTH, YYCAEPNCGRAFASATNYKNHMRIH, YVCTVPGCDKRFTEYSSLYKHHVVH, and YNCNHCGKTYKQISTLAMHKRTAH.

Belongs to the GLI C2H2-type zinc-finger protein family.

It is found in the nucleus. Transcriptional activator. Activates the gene for selenocysteine tRNA (tRNAsec). Binds to the activator element (AE) motif of the selenocysteine tRNA gene promoter. The protein is Zinc finger protein 143 (znf143) of Danio rerio (Zebrafish).